A 604-amino-acid chain; its full sequence is MADDKGTDPKEGCSDFIYLEAECSDISDLDNDLETLLEEGAGSDISDLINDEVVEQGNSRELLCQQEREESELQVQYLKRKCFSPKAVQELSPRLQSMNISSEHKSKRRLFVEQDSGLELSLNEAEDSTQELEVPASAPAPAAEGDIGLGTVRDLLRSSNSRATLLSKFKDSFGVSFTELTRQYKSNKTCCHHWVLAVYAAKDDLIDASKQLLQQHCFYIWLQSFCPMSLYLCCFNVGKSRDTVVRLIATLLQVHENHILSEPPKNRSIPAALFWYKGSLNSNVFCFGEAPDWILSQTMIQHQTADTLQFDLSRMIQWAYDNDHIDESIIAYQYAKLADIDSNAKAFLAHNSQVKYVKECALMVRYYKRGEMKEMSISAWIHHCISKVEGEGNWQHIVRFIRYQNLNFIMFLDKFRTFLKNLPKKNCLLIYGPPDTGKSMFAMSLIKLLKGSVVSFANSKSQFWLQPLADGKIGLLDDATDVCWQYIDSFLRNGLDGNLVSLDIKHKAPCQMKFPPLIITSNINLLKEERYRFLHSRVTQIDFPNKFPFDSDNKPLFELTDQSWASFFKRLWTQLELSDQEDEGDNGNSQRTFHCTAREVNGHI.

A Nuclear localization signal motif is present at residues 79-81; the sequence is KRK. Phosphoserine; by host occurs at positions 84 and 92. The segment at 144–307 is DNA-binding region; sequence EGDIGLGTVR…TMIQHQTADT (164 aa). The SF3 helicase domain occupies 406 to 556; the sequence is LNFIMFLDKF…FPFDSDNKPL (151 aa). ATP is bound at residue 432–439; sequence GPPDTGKS. A Glycyl lysine isopeptide (Lys-Gly) (interchain with G-Cter in SUMO) cross-link involves residue Lys513.

This sequence belongs to the papillomaviridae E1 protein family. In terms of assembly, can form hexamers. Interacts with E2 protein; this interaction increases E1 DNA binding specificity. Interacts with host DNA polymerase subunit POLA2. Interacts with host single stranded DNA-binding protein RPA1. Interacts with host TOP1; this interaction stimulates the enzymatic activity of TOP1. Post-translationally, phosphorylated. In terms of processing, sumoylated.

The protein resides in the host nucleus. It catalyses the reaction Couples ATP hydrolysis with the unwinding of duplex DNA by translocating in the 3'-5' direction.. The catalysed reaction is ATP + H2O = ADP + phosphate + H(+). Its function is as follows. ATP-dependent DNA 3'-5' helicase required for initiation of viral DNA replication. It forms a complex with the viral E2 protein. The E1-E2 complex binds to the replication origin which contains binding sites for both proteins. During the initial step, a dimer of E1 interacts with a dimer of protein E2 leading to a complex that binds the viral origin of replication with high specificity. Then, a second dimer of E1 displaces the E2 dimer in an ATP-dependent manner to form the E1 tetramer. Following this, two E1 monomers are added to each half of the site, which results in the formation of two E1 trimers on the viral ori. Subsequently, two hexamers will be created. The double hexamer acts as a bi-directional helicase machinery and unwinds the viral DNA and then recruits the host DNA polymerase to start replication. The polypeptide is Replication protein E1 (Homo sapiens (Human)).